Here is a 1411-residue protein sequence, read N- to C-terminus: Early endosome antigen 1 (1411 aa).

The disordered stretch occupies residues 1–27 (MFRRILQRTPGRVGSQGSDLDSSATPI). A compositionally biased stretch (polar residues) spans 15 to 27 (SQGSDLDSSATPI). Residues 41–64 (FICPQCMKSLGSADELFKHYQAVH) form a C2H2-type zinc finger. Residues serine 52 and serine 70 each carry the phosphoserine modification. A coiled-coil region spans residues 78–1348 (LALTRDDITL…IKHTQALNRK (1271 aa)). Disordered regions lie at residues 476–501 (STELQHQLEKSKQQHQEQQALQQSAT) and 1189–1217 (EKESQQLMREQVKKEEEKRKEEFSEKEAK). Residues 481–490 (HQLEKSKQQH) show a composition bias toward basic and acidic residues. Over residues 491-500 (QEQQALQQSA) the composition is skewed to low complexity. The FYVE-type zinc-finger motif lies at 1352–1410 (DNEVQNCMSCGKCFSVTVRRHHCRQCGNIFCAECSTKNALTPSSKKPVRVCDACFNDLQ). Residues cysteine 1358, cysteine 1361, cysteine 1374, cysteine 1377, cysteine 1382, cysteine 1385, cysteine 1402, and cysteine 1405 each coordinate Zn(2+).

As to quaternary structure, homodimer. Binds STX6. Binds RAB5A, RAB5B, RAB5C and RAB22A that have been activated by GTP-binding. Interacts with ERBB2. Interacts with RAB31. Interacts with SAMD9 and SAMD9L. May interact with PLEKHF2.

Its subcellular location is the cytoplasm. It localises to the early endosome membrane. Functionally, binds phospholipid vesicles containing phosphatidylinositol 3-phosphate and participates in endosomal trafficking. This chain is Early endosome antigen 1 (Eea1), found in Mus musculus (Mouse).